Consider the following 145-residue polypeptide: Eukaryotic translation initiation factor 1A (145 aa).

Basic residues predominate over residues 1-15 (MPKNKGKGGKNRKRG). Residues 1 to 25 (MPKNKGKGGKNRKRGKNEADDDKRE) are disordered. Residues 16-25 (KNEADDDKRE) are compositionally biased toward basic and acidic residues. The 75-residue stretch at 22-96 (DKRELVFKED…DKADVILKLM (75 aa)) folds into the S1-like domain.

This sequence belongs to the eIF-1A family.

Functionally, seems to be required for maximal rate of protein biosynthesis. Enhances ribosome dissociation into subunits and stabilizes the binding of the initiator Met-tRNA(I) to 40 S ribosomal subunits. This is Eukaryotic translation initiation factor 1A from Onobrychis viciifolia (Common sainfoin).